A 302-amino-acid chain; its full sequence is Deoxyhypusine hydroxylase (302 aa).

HEAT-like PBS-type repeat units lie at residues 23–49, 54–80, 87–113, 175–201, 206–232, and 239–265; these read ERFRALFTLKNIGGGAAIEAISKAFDD, LKHELAYCLGQMQDAQALDILTKVLKD, VRHEAAEAMGAIGHPDVLPILEEYKQD, DRYRAMFSLRNLRTEESVLAIAEGLKD, FRHEVAFVLGQLQEPCSIPFLQENLED, and VRHECAEALGAIATEDCIQILNRYAED. Residues His56, Glu57, His89, and Glu90 each coordinate Fe cation. Fe cation is bound by residues His208, Glu209, His241, and Glu242.

This sequence belongs to the deoxyhypusine hydroxylase family. The cofactor is Fe(2+).

It is found in the endoplasmic reticulum membrane. It carries out the reaction [eIF5A protein]-deoxyhypusine + AH2 + O2 = [eIF5A protein]-hypusine + A + H2O. It participates in protein modification; eIF5A hypusination. Catalyzes the hydroxylation of the N(6)-(4-aminobutyl)-L-lysine intermediate to form hypusine, an essential post-translational modification only found in mature eIF-5A factor. Essential for organismal viability and plays a role in a wide number of important processes such as cell growth and proliferation, and regulates induction of autophagy and protein synthesis. Has a role in eIF-5A-mediated translational control. The sequence is that of Deoxyhypusine hydroxylase from Drosophila melanogaster (Fruit fly).